Consider the following 590-residue polypeptide: Pre-mRNA-splicing factor CEF1 (590 aa).

2 consecutive HTH myb-type domains span residues 1–60 and 63–110; these read MPPV…NPKL and TEFS…ESED. DNA-binding regions (H-T-H motif) lie at residues 33 to 56 and 84 to 106; these read WSKVASLLQKKTARQSELRWNEYL and WRTIADMMARPAQVCVERYNRLL. Basic and acidic residues-rich tracts occupy residues 244 to 263, 271 to 281, and 337 to 351; these read FERKVNRKGLDGNKDKPSKK, HDENEHVEKAA, and LLPHDSGQEDNERSN. 2 disordered regions span residues 244-286 and 336-355; these read FERK…GEST and ELLPHDSGQEDNERSNIKSG. Positions 460-490 are interaction with PRP19 and self-interaction; that stretch reads ANAINKEPHMVPEDTVDFLKEVESRMQHITQ.

This sequence belongs to the CEF1 family. In terms of assembly, belongs to the NTC complex (or PRP19-associated complex), composed of at least CEF1, CLF1, ISY1, NTC20, SNT309, SYF1, SYF2, and PRP19. The NTC complex associates with the spliceosome after the release of the U1 and U4 snRNAs and forms the CWC spliceosome subcomplex (or CEF1-associated complex) reminiscent of a late-stage spliceosome composed also of the U2, U5 and U6 snRNAs and at least BUD13, BUD31, BRR2, CDC40, CUS1, CWC2, CWC15, CWC21, CWC22, CWC23, CWC24, CWC25, CWC27, ECM2, HSH155, IST3, LEA1, MSL1, PRP8, PRP9, PRP11, PRP21, PRP22, PRP45, PRP46, SLU7, SMB1, SMD1, SMD2, SMD3, SMX2, SMX3, SNU114, SPP2, RSE1 and YJU2. Interacts with CLF1, ISY1, NTC20, PRP19, PRP46, SYF1 and SYF2.

It is found in the cytoplasm. The protein localises to the nucleus. Its function is as follows. Involved in pre-mRNA splicing and cell cycle control. Required for the binding of the NTC complex (or PRP19-associated complex) components to the spliceosome to mediate conformational rearrangement or to stabilize the structure of the spliceosome after U4 snRNA dissociation, which leads to spliceosome maturation. Its absence leads to an arrest of the cell cycle, possibly due to the inefficient splicing of TUB1. In Saccharomyces cerevisiae (strain ATCC 204508 / S288c) (Baker's yeast), this protein is Pre-mRNA-splicing factor CEF1 (CEF1).